Consider the following 470-residue polypeptide: Homogentisate 1,2-dioxygenase (470 aa).

Residues histidine 356, glutamate 362, and histidine 392 each contribute to the Fe cation site.

The protein belongs to the homogentisate dioxygenase family. It depends on Fe cation as a cofactor.

It catalyses the reaction homogentisate + O2 = 4-maleylacetoacetate + H(+). It functions in the pathway amino-acid degradation; L-phenylalanine degradation; acetoacetate and fumarate from L-phenylalanine: step 4/6. The protein is Homogentisate 1,2-dioxygenase (HGO) of Oryza sativa subsp. japonica (Rice).